A 186-amino-acid polypeptide reads, in one-letter code: Mitoferrin-2A (186 aa).

The stretch at 75–163 (SNVTTHMLAG…FACYEKLKKT (89 aa)) is one Solcar repeat. 3 consecutive transmembrane segments (helical) span residues 77-96 (VTTH…CLMY), 137-157 (RGLN…FACY), and 172-185 (GNSH…YSCP).

It belongs to the mitochondrial carrier (TC 2.A.29) family.

The protein resides in the mitochondrion inner membrane. The enzyme catalyses Fe(2+)(in) = Fe(2+)(out). Mitochondrial iron transporter that mediates iron uptake. Probably required for heme synthesis of hemoproteins and Fe-S cluster assembly in non-erythroid cells. The chain is Mitoferrin-2A (slc25a28-a) from Xenopus laevis (African clawed frog).